The sequence spans 255 residues: Arginine-binding extracellular protein ArtP (255 aa).

The N-terminal stretch at 1–19 (MKKWLLLLVAACITFALTA) is a signal peptide. Cys-20 carries N-palmitoyl cysteine lipidation. A lipid anchor (S-diacylglycerol cysteine) is attached at Cys-20.

Belongs to the bacterial solute-binding protein 3 family.

Its subcellular location is the cell membrane. Its function is as follows. Part of a binding-protein-dependent transport system for arginine. This is Arginine-binding extracellular protein ArtP (artP) from Bacillus subtilis (strain 168).